The primary structure comprises 159 residues: Large ribosomal subunit protein uL10 (159 aa).

The protein belongs to the universal ribosomal protein uL10 family. Part of the ribosomal stalk of the 50S ribosomal subunit. The N-terminus interacts with L11 and the large rRNA to form the base of the stalk. The C-terminus forms an elongated spine to which L12 dimers bind in a sequential fashion forming a multimeric L10(L12)X complex.

Its function is as follows. Forms part of the ribosomal stalk, playing a central role in the interaction of the ribosome with GTP-bound translation factors. The protein is Large ribosomal subunit protein uL10 of Campylobacter jejuni subsp. jejuni serotype O:6 (strain 81116 / NCTC 11828).